The following is a 237-amino-acid chain: 7-cyano-7-deazaguanine synthase (237 aa).

14 to 24 provides a ligand contact to ATP; it reads FSGGQDSATCL. Residues C202, C217, C220, and C223 each coordinate Zn(2+).

This sequence belongs to the QueC family. It depends on Zn(2+) as a cofactor.

It carries out the reaction 7-carboxy-7-deazaguanine + NH4(+) + ATP = 7-cyano-7-deazaguanine + ADP + phosphate + H2O + H(+). It participates in purine metabolism; 7-cyano-7-deazaguanine biosynthesis. Its function is as follows. Catalyzes the ATP-dependent conversion of 7-carboxy-7-deazaguanine (CDG) to 7-cyano-7-deazaguanine (preQ(0)). This chain is 7-cyano-7-deazaguanine synthase, found in Rhodopseudomonas palustris (strain ATCC BAA-98 / CGA009).